The sequence spans 752 residues: Multifunctional tryptophan biosynthesis protein (752 aa).

Residues phenylalanine 3–glycine 202 form the Glutamine amidotransferase type-1 domain. Glycine 58 to glycine 60 contacts L-glutamine. Cysteine 86 (nucleophile; for GATase activity) is an active-site residue. Serine 136–leucine 137 lines the L-glutamine pocket. Active-site for GATase activity residues include histidine 176 and glutamate 178. Residues isoleucine 231–isoleucine 495 form an indole-3-glycerol phosphate synthase region. The segment at leucine 509–glycine 752 is N-(5'-phosphoribosyl)anthranilate isomerase.

It carries out the reaction N-(5-phospho-beta-D-ribosyl)anthranilate = 1-(2-carboxyphenylamino)-1-deoxy-D-ribulose 5-phosphate. The catalysed reaction is 1-(2-carboxyphenylamino)-1-deoxy-D-ribulose 5-phosphate + H(+) = (1S,2R)-1-C-(indol-3-yl)glycerol 3-phosphate + CO2 + H2O. The enzyme catalyses chorismate + L-glutamine = anthranilate + pyruvate + L-glutamate + H(+). The protein operates within amino-acid biosynthesis; L-tryptophan biosynthesis; L-tryptophan from chorismate: step 1/5. It participates in amino-acid biosynthesis; L-tryptophan biosynthesis; L-tryptophan from chorismate: step 3/5. It functions in the pathway amino-acid biosynthesis; L-tryptophan biosynthesis; L-tryptophan from chorismate: step 4/5. Functionally, trifunctional enzyme bearing the Gln amidotransferase (GATase) domain of anthranilate synthase, indole-glycerolphosphate synthase, and phosphoribosylanthranilate isomerase activities. This chain is Multifunctional tryptophan biosynthesis protein (TRP1), found in Cryptococcus neoformans var. neoformans serotype D (strain B-3501A) (Filobasidiella neoformans).